Consider the following 619-residue polypeptide: Translation initiation factor eIF2B subunit delta (619 aa).

The segment covering 21 to 32 has biased composition (basic and acidic residues); the sequence is GDYLDSKQEGKP. The tract at residues 21 to 251 is disordered; the sequence is GDYLDSKQEG…PKQRGKITKK (231 aa). Residues 42-56 show a composition bias toward low complexity; sequence TNTSPVSIPTIISPP. The segment covering 57 to 84 has biased composition (polar residues); that stretch reads LGSNNSNYGKSPKSSYDNKQTSPLLSAS. Positions 85–98 are enriched in low complexity; that stretch reads NNRKNNNNNNNNNN. Positions 99 to 125 are enriched in polar residues; sequence ATSPKDSSIIGKNNVNSDLSKVSSSLN. Over residues 136 to 199 the composition is skewed to low complexity; the sequence is STSSTPTSTP…KQQSKQQATQ (64 aa). The span at 200–244 shows a compositional bias: basic and acidic residues; that stretch reads QDKKDKEQQQQQQDKQDKESNEIKGSKEVAKDGQHGVKQFDDPKQ.

It belongs to the eIF-2B alpha/beta/delta subunits family. In terms of assembly, component of the translation initiation factor 2B (eIF2B) complex which is a heterodecamer of two sets of five different subunits: alpha, beta, gamma, delta and epsilon. Subunits alpha, beta and delta comprise a regulatory subcomplex and subunits epsilon and gamma comprise a catalytic subcomplex. Within the complex, the hexameric regulatory complex resides at the center, with the two heterodimeric catalytic subcomplexes bound on opposite sides.

It is found in the cytoplasm. The protein resides in the cytosol. Functionally, acts as a component of the translation initiation factor 2B (eIF2B) complex, which catalyzes the exchange of GDP for GTP on eukaryotic initiation factor 2 (eIF2) gamma subunit. Its guanine nucleotide exchange factor activity is repressed when bound to eIF2 complex phosphorylated on the alpha subunit, thereby limiting the amount of methionyl-initiator methionine tRNA available to the ribosome and consequently global translation is repressed. The protein is Translation initiation factor eIF2B subunit delta (eif2b4) of Dictyostelium discoideum (Social amoeba).